The sequence spans 339 residues: Phenylalanine--tRNA ligase alpha subunit (339 aa).

A compositionally biased stretch (basic and acidic residues) spans 1–14 (MEAKLKQLEEKAKQ). Residues 1–20 (MEAKLKQLEEKAKQDIQAST) are disordered. Glu-254 is a Mg(2+) binding site.

Belongs to the class-II aminoacyl-tRNA synthetase family. Phe-tRNA synthetase alpha subunit type 1 subfamily. Tetramer of two alpha and two beta subunits. It depends on Mg(2+) as a cofactor.

The protein resides in the cytoplasm. The enzyme catalyses tRNA(Phe) + L-phenylalanine + ATP = L-phenylalanyl-tRNA(Phe) + AMP + diphosphate + H(+). This Alkaliphilus metalliredigens (strain QYMF) protein is Phenylalanine--tRNA ligase alpha subunit.